The primary structure comprises 601 residues: Potassium-transporting ATPase potassium-binding subunit (601 aa).

A run of 12 helical transmembrane segments spans residues 6-26 (IMLLVAFLGVLLALAYPLGLF), 65-85 (SYAIALLVFNTLGALFVYAVQ), 136-156 (ALTGQNFFSAATGIAVAFALI), 179-199 (LYILLPLAIVVSVALMGQGVI), 283-303 (FSNFIEMLAIFLIPAGLCFTF), 313-333 (GWAVLGAMTLIFVVMTSIVMT), 367-387 (FGISASALFTAVTTAASCGAV), 397-417 (MGGFVPLVLMQFGEVVFGGVG), 419-439 (GLYGMLIFAILSVFIAGLMIG), 458-478 (SIAILVTPTLVLVGTAIAVLV), 524-544 (MLAIAMWFGRFAMIVPILAIA), and 566-586 (LFVALLVGVVVLVGVLNYVPA).

The protein belongs to the KdpA family. As to quaternary structure, the system is composed of three essential subunits: KdpA, KdpB and KdpC.

The protein resides in the cell inner membrane. In terms of biological role, part of the high-affinity ATP-driven potassium transport (or Kdp) system, which catalyzes the hydrolysis of ATP coupled with the electrogenic transport of potassium into the cytoplasm. This subunit binds the periplasmic potassium ions and delivers the ions to the membrane domain of KdpB through an intramembrane tunnel. The protein is Potassium-transporting ATPase potassium-binding subunit of Herminiimonas arsenicoxydans.